Consider the following 157-residue polypeptide: Arginine repressor (157 aa).

The protein belongs to the ArgR family.

The protein localises to the cytoplasm. The protein operates within amino-acid biosynthesis; L-arginine biosynthesis [regulation]. In terms of biological role, regulates arginine biosynthesis genes. This chain is Arginine repressor, found in Lactobacillus delbrueckii subsp. bulgaricus (strain ATCC 11842 / DSM 20081 / BCRC 10696 / JCM 1002 / NBRC 13953 / NCIMB 11778 / NCTC 12712 / WDCM 00102 / Lb 14).